Here is a 172-residue protein sequence, read N- to C-terminus: NADH dehydrogenase [ubiquinone] 1 alpha subcomplex subunit 8 (172 aa).

2 consecutive CHCH domains span residues 33–74 and 75–118; these read GAQC…FRQI and KRHC…LGWV. 4 consecutive short sequence motifs (cx9C motif) follow at residues 36 to 46, 56 to 66, 78 to 88, and 100 to 110; these read CDKPNKEFMLC, CLEEGKLVNQC, CAEPFTEYWTC, and CRKQQAQFDEC. Disulfide bonds link C36/C66, C46/C56, C78/C110, and C88/C100. The tract at residues 133 to 159 is disordered; the sequence is TDRPLPENPYHSRARPEPNPEVEGDLK. A compositionally biased stretch (basic and acidic residues) spans 146–159; it reads ARPEPNPEVEGDLK.

The protein belongs to the complex I NDUFA8 subunit family. As to quaternary structure, complex I is composed of 45 different subunits.

The protein localises to the mitochondrion inner membrane. It localises to the mitochondrion intermembrane space. The protein resides in the mitochondrion. Functionally, accessory subunit of the mitochondrial membrane respiratory chain NADH dehydrogenase (Complex I), that is believed not to be involved in catalysis. Complex I functions in the transfer of electrons from NADH to the respiratory chain. The immediate electron acceptor for the enzyme is believed to be ubiquinone. The sequence is that of NADH dehydrogenase [ubiquinone] 1 alpha subcomplex subunit 8 (NDUFA8) from Bos taurus (Bovine).